The chain runs to 77 residues: Large ribosomal subunit protein uL29 (77 aa).

It belongs to the universal ribosomal protein uL29 family.

The chain is Large ribosomal subunit protein uL29 from Mycobacterium avium (strain 104).